The primary structure comprises 247 residues: tRNA uridine(34) hydroxylase (247 aa).

The 95-residue stretch at 124-218 (TKQDVIVIDT…YLEDTQNKNN (95 aa)) folds into the Rhodanese domain. Residue Cys178 is the Cysteine persulfide intermediate of the active site.

It belongs to the TrhO family.

It catalyses the reaction uridine(34) in tRNA + AH2 + O2 = 5-hydroxyuridine(34) in tRNA + A + H2O. In terms of biological role, catalyzes oxygen-dependent 5-hydroxyuridine (ho5U) modification at position 34 in tRNAs. This is tRNA uridine(34) hydroxylase from Rickettsia africae (strain ESF-5).